The sequence spans 109 residues: ATPase inhibitor mai-2, mitochondrial (109 aa).

Disordered regions lie at residues 18 to 39 (FSAGGHGDGAGRGGGSGGSIRD) and 73 to 109 (EEVKHHEGQLENHKKVLERHQQRISEIEAQERALGKE). Over residues 21 to 35 (GGHGDGAGRGGGSGG) the composition is skewed to gly residues. Positions 55 to 109 (YFYKKQKAQLQELREHIQEEVKHHEGQLENHKKVLERHQQRISEIEAQERALGKE) form a coiled coil.

The protein belongs to the ATPase inhibitor family.

Its subcellular location is the mitochondrion. Its function is as follows. Thought to be a regulatory component of the ATP-synthesizing complex in the mitochondria. Activity is pH dependent. The protein is ATPase inhibitor mai-2, mitochondrial (mai-2) of Caenorhabditis elegans.